A 205-amino-acid chain; its full sequence is Ribonuclease HII (205 aa).

Positions 15–205 constitute an RNase H type-2 domain; it reads SRVCGIDEAG…SFKLRKLGEK (191 aa). 3 residues coordinate a divalent metal cation: aspartate 21, glutamate 22, and aspartate 117.

It belongs to the RNase HII family. Requires Mn(2+) as cofactor. The cofactor is Mg(2+).

The protein resides in the cytoplasm. It carries out the reaction Endonucleolytic cleavage to 5'-phosphomonoester.. Endonuclease that specifically degrades the RNA of RNA-DNA hybrids. This is Ribonuclease HII from Chlorobaculum parvum (strain DSM 263 / NCIMB 8327) (Chlorobium vibrioforme subsp. thiosulfatophilum).